Reading from the N-terminus, the 699-residue chain is Serine/threonine-protein kinase PRR2 (699 aa).

The segment at 168-193 (SSTKKNLANDISDNKHNNNSSNTIGH) is disordered. The span at 184 to 193 (NNNSSNTIGH) shows a compositional bias: polar residues. The Protein kinase domain occupies 361–653 (RDLDVVLGEG…INGILQDGWI (293 aa)). Residues 367 to 375 (LGEGSGGKV) and Lys390 contribute to the ATP site. Asp484 functions as the Proton acceptor in the catalytic mechanism.

The protein belongs to the protein kinase superfamily. Ser/Thr protein kinase family.

It catalyses the reaction L-seryl-[protein] + ATP = O-phospho-L-seryl-[protein] + ADP + H(+). The enzyme catalyses L-threonyl-[protein] + ATP = O-phospho-L-threonyl-[protein] + ADP + H(+). Functionally, protein kinase that functions as a regulator in the pheromone-induced mating pathway downstream of mitogen-activated protein kinase (MAPK) FUS3. Diminishes transcriptional induction of genes in response to pheromone signaling. This is Serine/threonine-protein kinase PRR2 (PRR2) from Saccharomyces cerevisiae (strain ATCC 204508 / S288c) (Baker's yeast).